The sequence spans 132 residues: D-ribose pyranase (132 aa).

The active-site Proton donor is H20. Residues D28, H99, and 121-123 (YAN) contribute to the substrate site.

It belongs to the RbsD / FucU family. RbsD subfamily. Homodecamer.

The protein localises to the cytoplasm. The catalysed reaction is beta-D-ribopyranose = beta-D-ribofuranose. The protein operates within carbohydrate metabolism; D-ribose degradation; D-ribose 5-phosphate from beta-D-ribopyranose: step 1/2. Functionally, catalyzes the interconversion of beta-pyran and beta-furan forms of D-ribose. The protein is D-ribose pyranase of Variovorax paradoxus (strain S110).